The chain runs to 162 residues: D-beta-D-heptose 1-phosphate adenylyltransferase (162 aa).

The enzyme catalyses D-glycero-beta-D-manno-heptose 1-phosphate + ATP + H(+) = ADP-D-glycero-beta-D-manno-heptose + diphosphate. It functions in the pathway nucleotide-sugar biosynthesis; ADP-L-glycero-beta-D-manno-heptose biosynthesis; ADP-L-glycero-beta-D-manno-heptose from D-glycero-beta-D-manno-heptose 7-phosphate: step 3/4. The protein operates within bacterial outer membrane biogenesis; LPS core biosynthesis. Functionally, catalyzes the ADP transfer from ATP to D-glycero-beta-D-manno-heptose 1-phosphate, yielding ADP-D-glycero-beta-D-manno-heptose. Cannot use GTP, UTP, or CTP as substrate. Is not active against the alpha-anomer substrate. Is also able to catalyze the ADP transfer to beta-glucose 1-phosphate in vitro, yielding ADP-beta-glucose. In Bordetella bronchiseptica (strain ATCC BAA-588 / NCTC 13252 / RB50) (Alcaligenes bronchisepticus), this protein is D-beta-D-heptose 1-phosphate adenylyltransferase.